The chain runs to 406 residues: MRNTKRAVVFAGDYAYIRQIETAMKSLCRHNSHLKIYLLNQDIPQEWFSQIRIYLQEMGGDLIDCKLIGSQFQMNWSNKLPHINHMTFARYFIPDFVTEDKVLYLDSDLIVTGDLTDLFELDLGENYLAAARSCFGAGVGFNAGVLLINNKKWGSETIRQKLIDLTEKEHENVEEGDQSILNMLFKDQYSSLEDQYNFQIGYDYGAATFKHQFIFDIPLEPLPLILHYISQDKPWNQFSVGRLREVWWEYSLMDWSVILNEWFSKSVKYPSKSQIFKLQCVNLTNSWCVEKIDYLAEQLPEVHFHIVAYTNMANELLALTRFPNVTVYPNSLPMLLEQIVIASDLYLDLNHDRKLEDAYEFVLKYKKPMIAFDNTCSENLSEISYEGIYPSSIPKKMVAAIRSYMR.

Residues 3 to 265 (NTKRAVVFAG…SVILNEWFSK (263 aa)) are GT8 domain. UDP-binding positions include 11-16 (AGDYAY) and 106-107 (DS). Residues aspartate 106, aspartate 108, and histidine 227 each contribute to the Mn(2+) site. 227–233 (HYISQDK) contributes to the UDP binding site.

This sequence in the N-terminal section; belongs to the glycosyltransferase 8 family. It depends on Mn(2+) as a cofactor.

It participates in protein modification; protein glycosylation. Involved in the polymorphic O-glycosylation of the serine-rich repeat protein PsrP. Catalyzes the third step in glycosylation of PsrP in this bacteria. Transfers galactose from UDP-galactose to the terminal glucose moiety of already-glycosylated PsrP (using the short substrate PsrP-GlcNAc-Glc). Has a very marked preference for PsrP substrate that has already been modified by GlcNAc and glucose. Has hydrolytic activity against UDP-galactose but none against UDP-glucose. Its function is as follows. Also catalyzes the fourth step in glycosylation of PsrP in this bacteria. Can transfer the sugar from UDP-galactose to the terminal sugar moiety of PsrP-GlcNAc-Glc-Glc and of PsrP-GlcNAc-Glc-Gal. In Streptococcus pneumoniae serotype 4 (strain ATCC BAA-334 / TIGR4), this protein is Glycosyltransferase GlyE.